A 168-amino-acid polypeptide reads, in one-letter code: Putative apoptosis regulator A9 (168 aa).

Residues serine 143–phenylalanine 162 traverse the membrane as a helical segment.

It is found in the host membrane. In terms of biological role, suppresses apoptosis in host cell and thus facilitates production of progeny virions. In Alcelaphine herpesvirus 1 (strain C500) (AlHV-1), this protein is Putative apoptosis regulator A9 (A9).